The following is a 503-amino-acid chain: DnaJ homolog subfamily C member 3 (503 aa).

Positions 1-31 (MVSAAASAGRLGSALPFLLVLLDLQYQGAEC) are cleaved as a signal peptide. TPR repeat units lie at residues 37–70 (VEKQ…DSDN), 71–104 (YIAY…KQDF), 105–137 (TSRL…NPSN), 153–186 (LQRL…CVWD), 187–220 (AELR…KSDN), 221–254 (TEAF…DQDH), 267–300 (LNKQ…EPDV), 305–338 (TRAK…EPTN), and 339–372 (VNAL…SEND). An intrachain disulfide couples Cys-247 to Cys-257. A disulfide bond links Cys-312 and Cys-328. Residues 374–392 (QIREGLERAQRMLKQSQKR) form a flexible linker region. In terms of domain architecture, J spans 393-461 (DYYKILGVKR…EMRRKFDAGE (69 aa)).

The protein resides in the endoplasmic reticulum. Functionally, may be involved in the unfolded protein response (UPR) during ER stress. In Gallus gallus (Chicken), this protein is DnaJ homolog subfamily C member 3 (DNAJC3).